A 1485-amino-acid chain; its full sequence is Cystic fibrosis transmembrane conductance regulator (1485 aa).

The Cytoplasmic portion of the chain corresponds to 1–78 (MQKTPLEKAS…KLINALKRCF (78 aa)). The helical transmembrane segment at 79-99 (FWKFLFYGILLYLGEVTKAVQ) threads the bilayer. An ABC transmembrane type-1 1 domain is found at 82 to 366 (FLFYGILLYL…WAVQTWYDSL (285 aa)). The Extracellular portion of the chain corresponds to 100–123 (PLLLGRIIASYDRDNEHERSIAYY). Residues 124–147 (LAIGLCLLFVVRMLLLHPAIFGLH) traverse the membrane as a helical segment. The Cytoplasmic portion of the chain corresponds to 148–196 (HIGMQMRIAMFSLIYKKTLKLSSKVLDKISTGQLVSLLSNNLNKFDEGL). The helical transmembrane segment at 197-217 (ALAHFVWIAPLQVLLLMGLLW) threads the bilayer. The Extracellular portion of the chain corresponds to 218–223 (DLLQAS). The helical transmembrane segment at 224–244 (AFCGLGFLIILSLFQARLGRM) threads the bilayer. Residues 245–299 (MMKYKDKRAGKINERLVITSQIIENIQSVKAYCWENAMEKIIETIRETELKLTRK) are Cytoplasmic-facing. Residues 300–320 (AAYVRYFNSSAFFFSGFFVVF) traverse the membrane as a helical segment. Residues 321 to 340 (LSIVPHLLLDGISLRKIFTT) are Extracellular-facing. A helical transmembrane segment spans residues 341–359 (ISFSIVLRMAVTRQFPWAV). Over 360-860 (QTWYDSLGVI…YLRFLTAHKN (501 aa)) the chain is Cytoplasmic. ATP is bound by residues Trp-402, Ser-435, 459–466 (GSTGAGKT), and Gln-494. The ABC transporter 1 domain maps to 422 to 647 (ISNEDPSAFF…RPEFSSHLIG (226 aa)). The disordered R region stretch occupies residues 652-833 (NAERRNSIIT…EEINEEDLKE (182 aa)). The span at 750 to 760 (PRSNFLNTGPT) shows a compositional bias: polar residues. The helical transmembrane segment at 861-881 (FIFILVFCLVIFFVEVAASSA) threads the bilayer. In terms of domain architecture, ABC transmembrane type-1 2 spans 880 to 1163 (SAWLWIIKRN…ASIDVDSLMR (284 aa)). The Extracellular segment spans residues 882–923 (WLWIIKRNAPAINMTSNENVSEVSDTLSVIVTHTSFYYVFYI). Asn-894 and Asn-900 each carry an N-linked (GlcNAc...) asparagine glycan. Residues 924–944 (YVGVADSLLALGIFRGLPLVH) traverse the membrane as a discontinuously helical segment. The Cytoplasmic portion of the chain corresponds to 945–995 (SLISVSKVLHKKMLHAILHAPMSTFNTMRAGRILNRFSKDTAILDDILPLS). A helical membrane pass occupies residues 996-1016 (IFDLTQLVLIVIGAITVVSLL). Over 1017–1018 (EP) the chain is Extracellular. The helical transmembrane segment at 1019–1039 (YIFLATVPVIVAFILLRSYFL) threads the bilayer. Residues 1040 to 1100 (HTSQQLKQLE…TANWFLYLST (61 aa)) lie on the Cytoplasmic side of the membrane. Residues 1101–1121 (LRWFQMTIEMIFVIFFIAVSF) traverse the membrane as a helical segment. Topologically, residues 1122 to 1135 (ISIATSGAGEEKVG) are extracellular. A helical membrane pass occupies residues 1136-1156 (IVLTLAMNIMNTLQWAVNASI). Topologically, residues 1157–1485 (DVDSLMRSVS…TEEEVQDTRL (329 aa)) are cytoplasmic. The ABC transporter 2 domain occupies 1213-1446 (MTVKNLSANY…KSFFKQAISH (234 aa)). ATP is bound by residues Tyr-1222 and 1247-1254 (GRTGSGKS). Residues 1458–1485 (RNSSKRKSRPQISALQEETEEEVQDTRL) are disordered. Acidic residues predominate over residues 1474–1485 (EETEEEVQDTRL). Residues 1483-1485 (TRL) carry the PDZ-binding motif.

This sequence belongs to the ABC transporter superfamily. ABCC family. CFTR transporter (TC 3.A.1.202) subfamily. In terms of assembly, monomer; does not require oligomerization for channel activity. May form oligomers in the membrane. In terms of processing, phosphorylated; cAMP treatment promotes phosphorylation and activates the channel. Dephosphorylation decreases the ATPase activity (in vitro). Phosphorylation at PKA sites activates the channel. Phosphorylation at PKC sites enhances the response to phosphorylation by PKA.

The protein localises to the apical cell membrane. It localises to the early endosome membrane. It is found in the cell membrane. Its subcellular location is the recycling endosome membrane. The protein resides in the endoplasmic reticulum membrane. It catalyses the reaction ATP + H2O + closed Cl(-) channel = ADP + phosphate + open Cl(-) channel.. It carries out the reaction chloride(in) = chloride(out). The catalysed reaction is hydrogencarbonate(in) = hydrogencarbonate(out). The enzyme catalyses ATP + H2O = ADP + phosphate + H(+). Epithelial ion channel that plays an important role in the regulation of epithelial ion and water transport and fluid homeostasis. Mediates the transport of chloride ions across the cell membrane. Possesses an intrinsic ATPase activity and utilizes ATP to gate its channel; the passive flow of anions through the channel is gated by cycles of ATP binding and hydrolysis by the ATP-binding domains. The ion channel is also permeable to HCO(3)(-); selectivity depends on the extracellular chloride concentration. Exerts its function also by modulating the activity of other ion channels and transporters. Contributes to the regulation of the pH and the ion content of the epithelial fluid layer. The chain is Cystic fibrosis transmembrane conductance regulator from Xenopus laevis (African clawed frog).